A 267-amino-acid polypeptide reads, in one-letter code: Diphthine--ammonia ligase (267 aa).

Tyr-97 carries the phosphotyrosine modification.

Belongs to the Diphthine--ammonia ligase family.

It catalyses the reaction diphthine-[translation elongation factor 2] + NH4(+) + ATP = diphthamide-[translation elongation factor 2] + AMP + diphosphate + H(+). It functions in the pathway protein modification; peptidyl-diphthamide biosynthesis. Amidase that may catalyze the last step of diphthamide biosynthesis using ammonium and ATP. Diphthamide biosynthesis consists in the conversion of an L-histidine residue in the translation elongation factor (EEF2) to diphthamide. The protein is Diphthine--ammonia ligase of Homo sapiens (Human).